Reading from the N-terminus, the 101-residue chain is MGTRFLLALFLVLLVLGLEVQADPESRQDEPASPALLAQMRESFSSYWDSAKAAAQDLYQKTYLPAVDERIRDMYSKSTAAVTTYAGIFTDQLFSMLKGEQ.

An N-terminal signal peptide occupies residues 1–22 (MGTRFLLALFLVLLVLGLEVQA). The interval 66–74 (AVDERIRDM) is lipid binding. The interval 78-101 (STAAVTTYAGIFTDQLFSMLKGEQ) is lipoprotein lipase cofactor.

Belongs to the apolipoprotein C2 family. Proapolipoprotein C-II is synthesized as a sialic acid containing glycoprotein which is subsequently desialylated prior to its proteolytic processing. Post-translationally, proapolipoprotein C-II, the major form found in plasma undergoes proteolytic cleavage of its N-terminal hexapeptide to generate apolipoprotein C-II, which occurs as the minor form in plasma.

The protein resides in the secreted. Component of chylomicrons, very low-density lipoproteins (VLDL), low-density lipoproteins (LDL), and high-density lipoproteins (HDL) in plasma. Plays an important role in lipoprotein metabolism as an activator of lipoprotein lipase. Both proapolipoprotein C-II and apolipoprotein C-II can activate lipoprotein lipase. In Tupaia glis (Common tree shrew), this protein is Apolipoprotein C-II (APOC2).